The primary structure comprises 173 residues: C-type lectin mosGCTL-7 (173 aa).

Positions 1–24 are cleaved as a signal peptide; that stretch reads MVVGWSLLGWALSWLAVATVVVSA. The 117-residue stretch at 51-167 folds into the C-type lectin domain; sequence NWFKATEYCH…CWDEYYFVCE (117 aa). 2 cysteine pairs are disulfide-bonded: cysteine 59–cysteine 166 and cysteine 139–cysteine 158. N-linked (GlcNAc...) asparagine glycosylation is found at asparagine 119 and asparagine 144.

In terms of assembly, interacts with putative receptor-type tyrosine-protein phosphatase mosPTP-1; the interaction may mediate the recruitment of Japanese encephalitis virus particles in complex with C-type lectin mosGCTL-7 to the cell surface.

The protein resides in the secreted. In terms of biological role, carbohydrate-binding protein. (Microbial infection) Facilitates Japanese encephalitis virus infection in mosquitoes. The chain is C-type lectin mosGCTL-7 from Culex quinquefasciatus (Southern house mosquito).